The following is a 62-amino-acid chain: Photosystem II reaction center protein Z (62 aa).

The next 2 membrane-spanning stretches (helical) occupy residues 8-28 and 41-61; these read AVFALIATSSILLISVPVVFA and FSGTSLWITLVFLVGILNSLI.

The protein belongs to the PsbZ family. As to quaternary structure, PSII is composed of 1 copy each of membrane proteins PsbA, PsbB, PsbC, PsbD, PsbE, PsbF, PsbH, PsbI, PsbJ, PsbK, PsbL, PsbM, PsbT, PsbY, PsbZ, Psb30/Ycf12, at least 3 peripheral proteins of the oxygen-evolving complex and a large number of cofactors. It forms dimeric complexes.

Its subcellular location is the plastid. The protein resides in the chloroplast thylakoid membrane. May control the interaction of photosystem II (PSII) cores with the light-harvesting antenna, regulates electron flow through the 2 photosystem reaction centers. PSII is a light-driven water plastoquinone oxidoreductase, using light energy to abstract electrons from H(2)O, generating a proton gradient subsequently used for ATP formation. This is Photosystem II reaction center protein Z from Morus indica (Mulberry).